Consider the following 617-residue polypeptide: Chaperone protein DnaK (617 aa).

Residues 579-617 (KAQQEAQQASGEAGSADARGPDETVVDADYEVVDDEKRK) form a disordered region. Positions 580–594 (AQQEAQQASGEAGSA) are enriched in low complexity. The segment covering 602-617 (TVVDADYEVVDDEKRK) has biased composition (acidic residues).

It belongs to the heat shock protein 70 family.

Functionally, acts as a chaperone. This Methanosarcina acetivorans (strain ATCC 35395 / DSM 2834 / JCM 12185 / C2A) protein is Chaperone protein DnaK.